Reading from the N-terminus, the 562-residue chain is Septation ring formation regulator EzrA (562 aa).

The Extracellular portion of the chain corresponds to 1–2 (ME). A helical membrane pass occupies residues 3 to 21 (FVIGLLIVLLALFAAGYFF). The Cytoplasmic segment spans residues 22 to 562 (RKKIYAEIDR…VEKIKADISA (541 aa)). Coiled-coil stretches lie at residues 377-425 (YSLL…LKKT) and 470-497 (MEEA…LVEQ).

Belongs to the EzrA family. Post-translationally, may be degraded by FtsH protease.

The protein localises to the cell membrane. The protein resides in the membrane raft. Functionally, negative regulator of FtsZ ring formation; modulates the frequency and position of FtsZ ring formation. Inhibits FtsZ ring formation at polar sites. Interacts either with FtsZ or with one of its binding partners to promote depolymerization. This Bacillus subtilis (strain 168) protein is Septation ring formation regulator EzrA.